Consider the following 312-residue polypeptide: Epoxyqueuosine reductase (312 aa).

The Proton donor role is filled by aspartate 132. Residues glutamate 174–isoleucine 206 enclose the 4Fe-4S ferredoxin-type 1 domain. 8 residues coordinate [4Fe-4S] cluster: cysteine 186, cysteine 189, cysteine 192, cysteine 196, cysteine 212, cysteine 240, cysteine 243, and cysteine 247. Positions proline 226–threonine 257 constitute a 4Fe-4S ferredoxin-type 2 domain.

The protein belongs to the QueG family. As to quaternary structure, monomer. Cob(II)alamin is required as a cofactor. It depends on [4Fe-4S] cluster as a cofactor.

It is found in the cytoplasm. It carries out the reaction epoxyqueuosine(34) in tRNA + AH2 = queuosine(34) in tRNA + A + H2O. The protein operates within tRNA modification; tRNA-queuosine biosynthesis. In terms of biological role, catalyzes the conversion of epoxyqueuosine (oQ) to queuosine (Q), which is a hypermodified base found in the wobble positions of tRNA(Asp), tRNA(Asn), tRNA(His) and tRNA(Tyr). In Prochlorococcus marinus (strain NATL2A), this protein is Epoxyqueuosine reductase.